Reading from the N-terminus, the 131-residue chain is Ribosome-binding factor A (131 aa).

This sequence belongs to the RbfA family. Monomer. Binds 30S ribosomal subunits, but not 50S ribosomal subunits or 70S ribosomes.

It is found in the cytoplasm. Functionally, one of several proteins that assist in the late maturation steps of the functional core of the 30S ribosomal subunit. Associates with free 30S ribosomal subunits (but not with 30S subunits that are part of 70S ribosomes or polysomes). Required for efficient processing of 16S rRNA. May interact with the 5'-terminal helix region of 16S rRNA. This chain is Ribosome-binding factor A, found in Thermotoga maritima (strain ATCC 43589 / DSM 3109 / JCM 10099 / NBRC 100826 / MSB8).